The following is a 61-amino-acid chain: UPF0434 protein PSPPH_1629 (61 aa).

Belongs to the UPF0434 family.

This is UPF0434 protein PSPPH_1629 from Pseudomonas savastanoi pv. phaseolicola (strain 1448A / Race 6) (Pseudomonas syringae pv. phaseolicola (strain 1448A / Race 6)).